The sequence spans 245 residues: Probable phosphatase YcdX (245 aa).

Zn(2+) is bound by residues His-7, His-9, His-15, His-40, Glu-73, His-101, His-131, Asp-192, and His-194.

The protein belongs to the PHP family. In terms of assembly, homotrimer. Zn(2+) serves as cofactor.

The protein is Probable phosphatase YcdX of Escherichia fergusonii (strain ATCC 35469 / DSM 13698 / CCUG 18766 / IAM 14443 / JCM 21226 / LMG 7866 / NBRC 102419 / NCTC 12128 / CDC 0568-73).